The chain runs to 51 residues: Basic phospholipase A2 Bfon11 (51 aa).

Tyrosine 27, glycine 29, and glycine 31 together coordinate Ca(2+). Cysteine 28 and cysteine 43 are oxidised to a cystine. Histidine 46 is an active-site residue. Position 47 (aspartate 47) interacts with Ca(2+).

It belongs to the phospholipase A2 family. Group II subfamily. D49 sub-subfamily. It depends on Ca(2+) as a cofactor. Expressed by the venom gland.

It localises to the secreted. The enzyme catalyses a 1,2-diacyl-sn-glycero-3-phosphocholine + H2O = a 1-acyl-sn-glycero-3-phosphocholine + a fatty acid + H(+). Its function is as follows. Snake venom phospholipase A2 (PLA2) that impairs hemostasis. PLA2 catalyzes the calcium-dependent hydrolysis of the 2-acyl groups in 3-sn-phosphoglycerides. The polypeptide is Basic phospholipase A2 Bfon11 (Bothrops fonsecai (Fonseca's lancehead)).